The following is a 350-amino-acid chain: LysM domain-containing GPI-anchored protein 2 (350 aa).

The first 23 residues, 1-23, serve as a signal peptide directing secretion; that stretch reads METSCFTLLGLLVSLSFFLTLSA. 4 N-linked (GlcNAc...) asparagine glycosylation sites follow: asparagine 30, asparagine 48, asparagine 76, and asparagine 99. Intrachain disulfides connect cysteine 31–cysteine 97, cysteine 38–cysteine 161, cysteine 95–cysteine 159, and cysteine 97–cysteine 161. LysM domains are found at residues 108–155 and 172–216; these read IEYT…KFWI and YAHV…PLDV. Chitin contacts are provided by residues 114–120 and 142–149; these read KDDILSF and PDPNKIEI. N-linked (GlcNAc...) asparagine glycosylation is found at asparagine 193, asparagine 238, asparagine 258, asparagine 289, and asparagine 305. 2 disulfides stabilise this stretch: cysteine 221–cysteine 253 and cysteine 248–cysteine 277. Aspartate 318 carries GPI-anchor amidated aspartate lipidation. A propeptide spans 319-350 (removed in mature form); that stretch reads SAGPDNYASTLSSSFNFVIVLIQCALLCLCLL.

In terms of assembly, forms homooligomers. Interacts with CERK1. Binds to chitin oligosaccharide elicitor.

The protein resides in the cell membrane. Chitin elicitor-binding protein involved in the perception of chitin oligosaccharide elicitor. The protein is LysM domain-containing GPI-anchored protein 2 (LYM2) of Arabidopsis thaliana (Mouse-ear cress).